Here is a 295-residue protein sequence, read N- to C-terminus: Transcription factor bHLH19 (295 aa).

Residues 115-164 enclose the bHLH domain; sequence VLAKEHVLAERKRREKLSEKFIALSALLPGLKKADKVTILDDAISRMKQL.

In terms of assembly, homodimer. As to expression, expressed in roots and leaves.

It localises to the nucleus. The protein is Transcription factor bHLH19 (BHLH19) of Arabidopsis thaliana (Mouse-ear cress).